A 105-amino-acid polypeptide reads, in one-letter code: UPF0145 protein lpl0253 (105 aa).

The protein belongs to the UPF0145 family.

The chain is UPF0145 protein lpl0253 from Legionella pneumophila (strain Lens).